The chain runs to 40 residues: Photosystem II reaction center protein J (40 aa).

The chain crosses the membrane as a helical span at residues 10-30 (LWLIGTVAGILVIGLVGIFFY).

The protein belongs to the PsbJ family. In terms of assembly, PSII is composed of 1 copy each of membrane proteins PsbA, PsbB, PsbC, PsbD, PsbE, PsbF, PsbH, PsbI, PsbJ, PsbK, PsbL, PsbM, PsbT, PsbX, PsbY, PsbZ, Psb30/Ycf12, at least 3 peripheral proteins of the oxygen-evolving complex and a large number of cofactors. It forms dimeric complexes.

The protein localises to the plastid. It localises to the chloroplast thylakoid membrane. One of the components of the core complex of photosystem II (PSII). PSII is a light-driven water:plastoquinone oxidoreductase that uses light energy to abstract electrons from H(2)O, generating O(2) and a proton gradient subsequently used for ATP formation. It consists of a core antenna complex that captures photons, and an electron transfer chain that converts photonic excitation into a charge separation. The chain is Photosystem II reaction center protein J from Marchantia polymorpha (Common liverwort).